A 248-amino-acid polypeptide reads, in one-letter code: DNA repair protein RecO (248 aa).

Belongs to the RecO family.

In terms of biological role, involved in DNA repair and RecF pathway recombination. This Bartonella tribocorum (strain CIP 105476 / IBS 506) protein is DNA repair protein RecO.